A 192-amino-acid chain; its full sequence is dTTP/UTP pyrophosphatase (192 aa).

The active-site Proton acceptor is Asp65.

Belongs to the Maf family. YhdE subfamily. A divalent metal cation is required as a cofactor.

It localises to the cytoplasm. It carries out the reaction dTTP + H2O = dTMP + diphosphate + H(+). The catalysed reaction is UTP + H2O = UMP + diphosphate + H(+). In terms of biological role, nucleoside triphosphate pyrophosphatase that hydrolyzes dTTP and UTP. May have a dual role in cell division arrest and in preventing the incorporation of modified nucleotides into cellular nucleic acids. This Fusobacterium nucleatum subsp. nucleatum (strain ATCC 25586 / DSM 15643 / BCRC 10681 / CIP 101130 / JCM 8532 / KCTC 2640 / LMG 13131 / VPI 4355) protein is dTTP/UTP pyrophosphatase.